The chain runs to 355 residues: Ribosomal RNA large subunit methyltransferase M (355 aa).

S-adenosyl-L-methionine is bound by residues S191, 224–227 (APGG), D243, D263, and D279. K308 functions as the Proton acceptor in the catalytic mechanism.

Belongs to the class I-like SAM-binding methyltransferase superfamily. RNA methyltransferase RlmE family. RlmM subfamily. As to quaternary structure, monomer.

It is found in the cytoplasm. It carries out the reaction cytidine(2498) in 23S rRNA + S-adenosyl-L-methionine = 2'-O-methylcytidine(2498) in 23S rRNA + S-adenosyl-L-homocysteine + H(+). Functionally, catalyzes the 2'-O-methylation at nucleotide C2498 in 23S rRNA. The polypeptide is Ribosomal RNA large subunit methyltransferase M (Stenotrophomonas maltophilia (strain R551-3)).